We begin with the raw amino-acid sequence, 478 residues long: Glycogen synthase (478 aa).

Residue lysine 15 coordinates ADP-alpha-D-glucose.

This sequence belongs to the glycosyltransferase 1 family. Bacterial/plant glycogen synthase subfamily.

It carries out the reaction [(1-&gt;4)-alpha-D-glucosyl](n) + ADP-alpha-D-glucose = [(1-&gt;4)-alpha-D-glucosyl](n+1) + ADP + H(+). It participates in glycan biosynthesis; glycogen biosynthesis. Synthesizes alpha-1,4-glucan chains using ADP-glucose. The protein is Glycogen synthase of Acholeplasma laidlawii (strain PG-8A).